Reading from the N-terminus, the 310-residue chain is Methionyl-tRNA formyltransferase (310 aa).

Position 114–117 (114–117 (SLLP)) interacts with (6S)-5,6,7,8-tetrahydrofolate.

Belongs to the Fmt family.

The catalysed reaction is L-methionyl-tRNA(fMet) + (6R)-10-formyltetrahydrofolate = N-formyl-L-methionyl-tRNA(fMet) + (6S)-5,6,7,8-tetrahydrofolate + H(+). In terms of biological role, attaches a formyl group to the free amino group of methionyl-tRNA(fMet). The formyl group appears to play a dual role in the initiator identity of N-formylmethionyl-tRNA by promoting its recognition by IF2 and preventing the misappropriation of this tRNA by the elongation apparatus. The chain is Methionyl-tRNA formyltransferase from Granulibacter bethesdensis (strain ATCC BAA-1260 / CGDNIH1).